Consider the following 554-residue polypeptide: Phosphomannomutase (554 aa).

Ser-149 functions as the Phosphoserine intermediate in the catalytic mechanism. Mg(2+) is bound by residues Ser-149, Asp-301, Asp-303, and Asp-305.

This sequence belongs to the phosphohexose mutase family. The cofactor is Mg(2+).

It carries out the reaction alpha-D-mannose 1-phosphate = D-mannose 6-phosphate. The polypeptide is Phosphomannomutase (manB) (Mycoplasma pneumoniae (strain ATCC 29342 / M129 / Subtype 1) (Mycoplasmoides pneumoniae)).